The following is a 573-amino-acid chain: DNA ligase (573 aa).

Glutamate 250 is an ATP binding site. The active-site N6-AMP-lysine intermediate is the lysine 252. ATP is bound by residues arginine 257, arginine 272, glutamate 301, phenylalanine 342, arginine 432, and lysine 438.

This sequence belongs to the ATP-dependent DNA ligase family. Mg(2+) is required as a cofactor.

It carries out the reaction ATP + (deoxyribonucleotide)n-3'-hydroxyl + 5'-phospho-(deoxyribonucleotide)m = (deoxyribonucleotide)n+m + AMP + diphosphate.. Its function is as follows. DNA ligase that seals nicks in double-stranded DNA during DNA replication, DNA recombination and DNA repair. This chain is DNA ligase, found in Methanococcus vannielii (strain ATCC 35089 / DSM 1224 / JCM 13029 / OCM 148 / SB).